The chain runs to 153 residues: Membrane-spanning 4-domains subfamily A member 13 (153 aa).

4 consecutive transmembrane segments (helical) span residues 1 to 21, 36 to 56, 71 to 91, and 111 to 131; these read MTGIFCIFMWYLLLILYMGQI, GCSLWGIFFIISGISIIRATW, ILCMILAIISMILTIVELSTF, and VLLSFYPLEVSMALTYSIFGC.

This sequence belongs to the MS4A family.

It is found in the membrane. Its function is as follows. May be involved in signal transduction as a component of a multimeric receptor complex. This chain is Membrane-spanning 4-domains subfamily A member 13 (MS4A13), found in Bos taurus (Bovine).